A 433-amino-acid polypeptide reads, in one-letter code: Histidinol dehydrogenase 2 (433 aa).

Residues Tyr130, Gln192, and Asn215 each contribute to the NAD(+) site. The substrate site is built by Ser238, Gln260, and His263. The Zn(2+) site is built by Gln260 and His263. Residues Glu328 and His329 each act as proton acceptor in the active site. Positions 329, 362, 416, and 421 each coordinate substrate. Asp362 is a binding site for Zn(2+). His421 provides a ligand contact to Zn(2+).

Belongs to the histidinol dehydrogenase family. It depends on Zn(2+) as a cofactor.

It catalyses the reaction L-histidinol + 2 NAD(+) + H2O = L-histidine + 2 NADH + 3 H(+). The protein operates within amino-acid biosynthesis; L-histidine biosynthesis; L-histidine from 5-phospho-alpha-D-ribose 1-diphosphate: step 9/9. Its function is as follows. Catalyzes the sequential NAD-dependent oxidations of L-histidinol to L-histidinaldehyde and then to L-histidine. This is Histidinol dehydrogenase 2 from Trichormus variabilis (strain ATCC 29413 / PCC 7937) (Anabaena variabilis).